The chain runs to 647 residues: Nucleoside triphosphatase I (647 aa).

Residues 48 to 212 form the Helicase ATP-binding domain; the sequence is FIGLKNLNSM…NNLIGLLRPN (165 aa). 61 to 68 is a binding site for ATP; sequence WDTGTGKT. A DEXH box motif is present at residues 150-153; the sequence is DEVH. In terms of domain architecture, Helicase C-terminal spans 378 to 541; sequence YIEACRIILN…KINVVFDLLK (164 aa). Residues 467-533 are binding to the cap-specific mRNA (nucleoside-2'-O-)-methyltransferase; the sequence is DIIILDMPWN…DIIKNKQGKI (67 aa).

The protein belongs to the helicase family. NPH I subfamily. As to quaternary structure, monomer. Interacts (via C-terminus) with RAP94 (via N-terminus). Interacts with the cap-specific mRNA (nucleoside-2'-O-)-methyltransferase.

The protein resides in the virion. It carries out the reaction a ribonucleoside 5'-triphosphate + H2O = a ribonucleoside 5'-diphosphate + phosphate + H(+). Its function is as follows. DNA-dependent ATPase required for providing the needed energy to achieve the termination of early transcripts. Acts in concert with the RAP94 subunit of the virion RNA polymerase and the capping enzyme/VTF to catalyze release of UUUUUNU-containing nascent RNA from the elongation complex. NPH-I must bind ssDNA in order to exhibit ATPase activity. This Choristoneura fumiferana (Spruce budworm moth) protein is Nucleoside triphosphatase I (NPH1).